Consider the following 165-residue polypeptide: IQSTSMDQGSLSEDSMNSFIRTFIQAGIWKNKVPKQAARTKDGTQTTAKKTEAEPEATANKDFQLGFQPVVSVDAELLRQQRRFSSPRVLLSENTPLEPPPLYLMEEPMVLNRTSRRKRFAEGKSHRGEYSVCDSESRWVTDKSSAVDIRGHQVTVLGEIRMGPS.

A signal peptide spans 1–3 (IQS). Positions 4–119 (TSMDQGSLSE…VLNRTSRRKR (116 aa)) are excised as a propeptide. The disordered stretch occupies residues 32–61 (KVPKQAARTKDGTQTTAKKTEAEPEATANK). Asparagine 112 carries N-linked (GlcNAc...) asparagine glycosylation.

The protein belongs to the NGF-beta family.

It is found in the secreted. Functionally, seems to promote the survival of visceral and proprioceptive sensory neurons. This is Neurotrophin-3 (NTF3) from Xenopeltis unicolor (Sunbeam snake).